Reading from the N-terminus, the 196-residue chain is RNA pyrophosphohydrolase (196 aa).

The Nudix hydrolase domain occupies 6–149; it reads GYRPNVGIVI…KRDVYRKVMK (144 aa). A Nudix box motif is present at residues 38–59; sequence GGINDNESAEQAMYRELHEEVG.

Belongs to the Nudix hydrolase family. RppH subfamily. A divalent metal cation is required as a cofactor.

Its function is as follows. Accelerates the degradation of transcripts by removing pyrophosphate from the 5'-end of triphosphorylated RNA, leading to a more labile monophosphorylated state that can stimulate subsequent ribonuclease cleavage. The polypeptide is RNA pyrophosphohydrolase (Haemophilus influenzae (strain ATCC 51907 / DSM 11121 / KW20 / Rd)).